Here is a 452-residue protein sequence, read N- to C-terminus: Pup--protein ligase (452 aa).

Residue E9 participates in Mg(2+) binding. R53 provides a ligand contact to ATP. Mg(2+) is bound at residue Y55. Catalysis depends on D57, which acts as the Proton acceptor. E63 lines the Mg(2+) pocket. ATP is bound by residues T66 and W419.

It belongs to the Pup ligase/Pup deamidase family. Pup-conjugating enzyme subfamily.

It carries out the reaction ATP + [prokaryotic ubiquitin-like protein]-L-glutamate + [protein]-L-lysine = ADP + phosphate + N(6)-([prokaryotic ubiquitin-like protein]-gamma-L-glutamyl)-[protein]-L-lysine.. It participates in protein degradation; proteasomal Pup-dependent pathway. The protein operates within protein modification; protein pupylation. Its function is as follows. Catalyzes the covalent attachment of the prokaryotic ubiquitin-like protein modifier Pup to the proteasomal substrate proteins, thereby targeting them for proteasomal degradation. This tagging system is termed pupylation. The ligation reaction involves the side-chain carboxylate of the C-terminal glutamate of Pup and the side-chain amino group of a substrate lysine. The sequence is that of Pup--protein ligase from Mycobacterium tuberculosis (strain KZN 1435 / MDR).